A 118-amino-acid polypeptide reads, in one-letter code: Small ribosomal subunit protein uS13 (118 aa).

Positions 94 to 118 (NLPVRGQNTKNNARTRKGPIRSIKR) are disordered. Over residues 106 to 118 (ARTRKGPIRSIKR) the composition is skewed to basic residues.

This sequence belongs to the universal ribosomal protein uS13 family. As to quaternary structure, part of the 30S ribosomal subunit. Forms a loose heterodimer with protein S19. Forms two bridges to the 50S subunit in the 70S ribosome.

Its function is as follows. Located at the top of the head of the 30S subunit, it contacts several helices of the 16S rRNA. In the 70S ribosome it contacts the 23S rRNA (bridge B1a) and protein L5 of the 50S subunit (bridge B1b), connecting the 2 subunits; these bridges are implicated in subunit movement. Contacts the tRNAs in the A and P-sites. The sequence is that of Small ribosomal subunit protein uS13 from Psychrobacter sp. (strain PRwf-1).